A 258-amino-acid chain; its full sequence is Serine protease VLSP-3 (258 aa).

An N-terminal signal peptide occupies residues 1–18 (MVLIRVLANLLVLQLSYA). Positions 19 to 24 (QKSSEL) are excised as a propeptide. Positions 25–249 (VIGGDECNIN…YTDWIQSIIA (225 aa)) constitute a Peptidase S1 domain. 6 disulfide bridges follow: Cys31/Cys163, Cys50/Cys66, Cys98/Cys256, Cys142/Cys210, Cys174/Cys189, and Cys200/Cys225. N-linked (GlcNAc...) asparagine glycosylation is present at Asn44. Residue His65 is the Charge relay system of the active site. 2 N-linked (GlcNAc...) asparagine glycosylation sites follow: Asn79 and Asn103. Asp110 functions as the Charge relay system in the catalytic mechanism. Residues Asn154 and Asn170 are each glycosylated (N-linked (GlcNAc...) asparagine). Ser204 serves as the catalytic Charge relay system. An N-linked (GlcNAc...) asparagine glycan is attached at Asn251.

The protein belongs to the peptidase S1 family. Snake venom subfamily. In terms of assembly, monomer. In terms of tissue distribution, expressed by the venom gland.

It localises to the secreted. In terms of biological role, snake venom serine protease that may act in the hemostasis system of the prey. The chain is Serine protease VLSP-3 from Macrovipera lebetinus (Levantine viper).